The sequence spans 66 residues: Large ribosomal subunit protein bL35 (66 aa).

The protein belongs to the bacterial ribosomal protein bL35 family.

This Treponema pallidum (strain Nichols) protein is Large ribosomal subunit protein bL35.